Consider the following 422-residue polypeptide: Receptor homology region, transmembrane domain- and RING domain-containing protein 3 (422 aa).

An N-terminal signal peptide occupies residues 1–22; that stretch reads MNLVVLLILTLLLFIVSYVVDA. The Lumenal segment spans residues 23–168; sequence GQVILVDSNI…NTEDSVWSLY (146 aa). An N-linked (GlcNAc...) asparagine glycan is attached at Asn31. Residues Cys64 and Cys89 are joined by a disulfide bond. In terms of domain architecture, PA spans 81–146; that stretch reads LVLIIRGGCS…RAGEMLKKYA (66 aa). The chain crosses the membrane as a helical span at residues 169 to 189; it reads ASIALILSLAIFCVMVTCVFF. At 190 to 422 the chain is on the cytoplasmic side; it reads YRYCSTIRNS…HFASAHSLPD (233 aa). The segment at 232–274 adopts an RING-type; atypical zinc-finger fold; sequence CAICLEDYIVGDKLRVLPCSHKFHVACVDSWLISWRTFCPVCK. The interval 344 to 368 is disordered; it reads LRRQASPLQSSSQRSHLSMKSSHSL. Residues 349 to 368 are compositionally biased toward polar residues; sequence SPLQSSSQRSHLSMKSSHSL.

It localises to the prevacuolar compartment membrane. The protein localises to the protein storage vacuole membrane. In terms of biological role, involved in the trafficking of vacuolar proteins. May function as a sorting receptor for protein trafficking to the protein storage vacuole (PSV). In Arabidopsis thaliana (Mouse-ear cress), this protein is Receptor homology region, transmembrane domain- and RING domain-containing protein 3 (RMR3).